Consider the following 206-residue polypeptide: Large ribosomal subunit protein uL4 (206 aa).

The disordered stretch occupies residues Gln-45–Gly-85. Positions His-58–Gly-70 are enriched in basic residues.

The protein belongs to the universal ribosomal protein uL4 family. In terms of assembly, part of the 50S ribosomal subunit.

Functionally, one of the primary rRNA binding proteins, this protein initially binds near the 5'-end of the 23S rRNA. It is important during the early stages of 50S assembly. It makes multiple contacts with different domains of the 23S rRNA in the assembled 50S subunit and ribosome. In terms of biological role, forms part of the polypeptide exit tunnel. This chain is Large ribosomal subunit protein uL4, found in Burkholderia mallei (strain NCTC 10247).